We begin with the raw amino-acid sequence, 267 residues long: Putative transcription factor Ovo-like 1 (267 aa).

C2H2-type zinc fingers lie at residues 118-140 (FTCH…MKCH), 146-168 (HLCT…VRTH), 174-197 (YKCS…KKIH), and 213-236 (YVCE…KERH).

As to expression, expressed in skin, testis, kidney and weakly in lung. Not detected in heart, brain, spleen, liver and skeletal muscle.

The protein localises to the nucleus. Its function is as follows. Putative transcription factor. Involved in hair formation and spermatogenesis. May function in the differentiation and/or maintenance of the urogenital system. This Mus musculus (Mouse) protein is Putative transcription factor Ovo-like 1 (Ovol1).